The following is a 327-amino-acid chain: Ribonucleoside-diphosphate reductase small chain (327 aa).

Fe cation-binding residues include aspartate 70, glutamate 101, and histidine 104. Tyrosine 108 is an active-site residue. Fe cation-binding residues include glutamate 164, glutamate 198, and histidine 201.

The protein belongs to the ribonucleoside diphosphate reductase small chain family. As to quaternary structure, heterotetramer composed of a homodimer of the large subunit (R1) and a homodimer of the small subunit (R2). Larger multisubunit protein complex are also active, composed of (R1)n(R2)n. Fe cation is required as a cofactor.

The catalysed reaction is a 2'-deoxyribonucleoside 5'-diphosphate + [thioredoxin]-disulfide + H2O = a ribonucleoside 5'-diphosphate + [thioredoxin]-dithiol. Ribonucleoside-diphosphate reductase holoenzyme provides the precursors necessary for viral DNA synthesis. Allows virus growth in non-dividing cells. Catalyzes the biosynthesis of deoxyribonucleotides from the corresponding ribonucleotides. This chain is Ribonucleoside-diphosphate reductase small chain, found in Ornithodoros (relapsing fever ticks).